Here is a 430-residue protein sequence, read N- to C-terminus: tRNA-2-methylthio-N(6)-dimethylallyladenosine synthase (430 aa).

In terms of domain architecture, MTTase N-terminal spans 2–111 (KKIHIKTYGC…IPQAVERAIN (110 aa)). Residues Cys11, Cys47, Cys76, Cys147, Cys151, and Cys154 each coordinate [4Fe-4S] cluster. The region spanning 133-364 (RNSKHHAWIT…LNLQKEINKQ (232 aa)) is the Radical SAM core domain. The 62-residue stretch at 367–428 (ENYLNKTVEI…AGPLYGDIIK (62 aa)) folds into the TRAM domain.

It belongs to the methylthiotransferase family. MiaB subfamily. Monomer. [4Fe-4S] cluster is required as a cofactor.

Its subcellular location is the cytoplasm. It catalyses the reaction N(6)-dimethylallyladenosine(37) in tRNA + (sulfur carrier)-SH + AH2 + 2 S-adenosyl-L-methionine = 2-methylsulfanyl-N(6)-dimethylallyladenosine(37) in tRNA + (sulfur carrier)-H + 5'-deoxyadenosine + L-methionine + A + S-adenosyl-L-homocysteine + 2 H(+). Its function is as follows. Catalyzes the methylthiolation of N6-(dimethylallyl)adenosine (i(6)A), leading to the formation of 2-methylthio-N6-(dimethylallyl)adenosine (ms(2)i(6)A) at position 37 in tRNAs that read codons beginning with uridine. The sequence is that of tRNA-2-methylthio-N(6)-dimethylallyladenosine synthase from Thermosipho melanesiensis (strain DSM 12029 / CIP 104789 / BI429).